Reading from the N-terminus, the 56-residue chain is Large ribosomal subunit protein bL32 (56 aa).

The segment covering 1-20 has biased composition (basic residues); it reads MAVPKRRTSRSNTRSRRSQW. A disordered region spans residues 1 to 24; sequence MAVPKRRTSRSNTRSRRSQWKAKV.

Belongs to the bacterial ribosomal protein bL32 family.

The protein is Large ribosomal subunit protein bL32 of Frankia casuarinae (strain DSM 45818 / CECT 9043 / HFP020203 / CcI3).